We begin with the raw amino-acid sequence, 213 residues long: 5-methylthioribulose-1-phosphate/5-deoxyribulose-1-phosphate aldolase (213 aa).

The active-site Proton donor/acceptor is the Glu73. Co(2+) contacts are provided by Glu73, His92, His94, and His155.

This sequence belongs to the aldolase class II family. The cofactor is Co(2+).

The catalysed reaction is 5-(methylsulfanyl)-D-ribulose 1-phosphate = 2-(methylsulfanyl)acetaldehyde + dihydroxyacetone phosphate. The enzyme catalyses 5-deoxy-D-ribulose 1-phosphate = dihydroxyacetone phosphate + acetaldehyde. The protein operates within amino-acid biosynthesis; L-methionine biosynthesis via salvage pathway. Its function is as follows. Uses 5-methylthioribulose-1-phosphate to yield 2-(methylthio)acetaldehyde and dihydroxyacetone phosphate. Can also use 5-deoxyribulose 1-phosphate to yield acetaldehyde and dihydroxyacetone phosphate. Part of a bifunctional DHAP-shunt salvage pathway for SAM by-products. The chain is 5-methylthioribulose-1-phosphate/5-deoxyribulose-1-phosphate aldolase from Escherichia coli O45:K1 (strain S88 / ExPEC).